We begin with the raw amino-acid sequence, 186 residues long: TATA-box-binding protein F (186 aa).

2 tandem repeats follow at residues 10 to 86 (IENV…FDDL) and 101 to 179 (VQNI…NDRL).

Belongs to the TBP family.

General factor that plays a role in the activation of archaeal genes transcribed by RNA polymerase. Binds specifically to the TATA box promoter element which lies close to the position of transcription initiation. The sequence is that of TATA-box-binding protein F (tbpF) from Halobacterium salinarum (strain ATCC 700922 / JCM 11081 / NRC-1) (Halobacterium halobium).